The sequence spans 133 residues: Classical arabinogalactan protein 5 (133 aa).

A signal peptide spans Met-1–Ala-21. A Pyrrolidone carboxylic acid modification is found at Gln-22. Residues Ala-23–Ala-110 are disordered. The segment covering Gly-25–Pro-37 has biased composition (pro residues). Residues Thr-38–Pro-48 are compositionally biased toward low complexity. The segment covering Ala-49 to Ser-81 has biased composition (pro residues). The GPI-anchor amidated asparagine moiety is linked to residue Asn-109. Residues Ala-110 to Leu-133 constitute a propeptide, removed in mature form.

The protein belongs to the classical AGP family. O-glycosylated on the hydroxyproline residues. As to expression, expressed at a low level in flowers and siliques.

Its subcellular location is the cell membrane. Its function is as follows. Proteoglycan that seems to be implicated in diverse developmental roles such as differentiation, cell-cell recognition, embryogenesis and programmed cell death. This chain is Classical arabinogalactan protein 5 (AGP5), found in Arabidopsis thaliana (Mouse-ear cress).